We begin with the raw amino-acid sequence, 246 residues long: Probable transcriptional regulatory protein Rmag_0394 (246 aa).

This sequence belongs to the TACO1 family.

The protein localises to the cytoplasm. In Ruthia magnifica subsp. Calyptogena magnifica, this protein is Probable transcriptional regulatory protein Rmag_0394.